We begin with the raw amino-acid sequence, 1132 residues long: Eisosome protein SEG2 (1132 aa).

Positions 76-95 are enriched in polar residues; sequence KRTSSLPNQGHKNTSNNSAG. 2 disordered regions span residues 76-142 and 171-225; these read KRTS…GNSG and RYSL…NDYH. Residues 101 to 113 show a composition bias toward basic and acidic residues; it reads AHEDAETTFREFG. The span at 115-142 shows a compositional bias: polar residues; the sequence is KQSSKVLNISSSTGQNSKSRTTSLGNSG. S137 carries the phosphoserine modification. Basic and acidic residues predominate over residues 208–225; the sequence is GSQEKKSESGGKSKNDYH. S280 carries the post-translational modification Phosphoserine. The interval 404-429 is disordered; that stretch reads PTLSEPKPAYVPPEDVEKEPSTLSNQ. S504 and S507 each carry phosphoserine. 2 disordered regions span residues 510–938 and 961–993; these read GGNQ…FRSM and EKKE…THTT. K526 is covalently cross-linked (Glycyl lysine isopeptide (Lys-Gly) (interchain with G-Cter in ubiquitin)). Composition is skewed to acidic residues over residues 550–561 and 595–644; these read DQEEALSDNEPE and KDDD…DDEY. At S556 the chain carries Phosphoserine. Polar residues-rich tracts occupy residues 688–699 and 710–735; these read SENAEVSQSGTN and YLTN…TDTT. A Glycyl lysine isopeptide (Lys-Gly) (interchain with G-Cter in ubiquitin) cross-link involves residue K743. Residues 761-773 show a composition bias toward low complexity; it reads SSTSSSIYSIETS. 2 stretches are compositionally biased toward polar residues: residues 774–810 and 827–845; these read PNID…SSHQ and NRSC…TLSH. A compositionally biased stretch (low complexity) spans 850–860; sequence PASDSSSSPPY. Residues 916–930 show a composition bias toward basic and acidic residues; it reads PPARKSSFEKERPAK. 2 positions are modified to phosphoserine: S980 and S1022.

It belongs to the SEG1 family. Component of eisosomes, large cytoplasmic protein assemblies that localize to specialized domains termed MCCs on the plasma membrane.

It is found in the cell membrane. Functionally, likely plays only a minor role in eisosome assembly. This chain is Eisosome protein SEG2 (SEG2), found in Saccharomyces cerevisiae (strain ATCC 204508 / S288c) (Baker's yeast).